Consider the following 652-residue polypeptide: Gametogenetin (652 aa).

Disordered regions lie at residues 1–39 (MGNLQSEPSAGGGSRKVQPSDRAPDSRRTSLVEPEMTSQ), 52–237 (PGSA…DSES), 251–273 (PSLAPPAASSSLAAKASLGGGGG), 291–473 (QGPL…GHKE), and 488–576 (LAAD…GAAN). 2 stretches are compositionally biased toward basic and acidic residues: residues 18-30 (QPSDRAPDSRRTS) and 124-133 (RLLEASHRGQ). The segment at 123 to 486 (RRLLEASHRG…APTAAPALPP (364 aa)) is interaction with GGNBP1. 2 stretches are compositionally biased toward pro residues: residues 138 to 149 (SLRPLKPPPPPR) and 163 to 178 (QFPPPLETWKPPPPLP). A compositionally biased stretch (polar residues) spans 201–212 (ESQAGPRNQGQT). 3 stretches are compositionally biased toward low complexity: residues 213-230 (AGRARGGAPPHAGEGEMA), 251-267 (PSLAPPAASSSLAAKAS), and 299-312 (ARPLGEVSRGAQEA). A Phosphoserine modification is found at Ser389. Positions 407 to 422 (APALLAPPTFIFPAPT) are enriched in low complexity. 2 stretches are compositionally biased toward pro residues: residues 428-466 (RPGPPGLQELPPLPPPTPPPTLQPPALQPTPLPVAPPLT) and 495-513 (APSPAPAPTVAEPSPPVSA). The interval 491–652 (DQAPAPSPAP…HYDLQATHSN (162 aa)) is interactions with ZNF403/GGNBP2 and OAZ3. Residues 523–532 (TRTRRNKGSR) show a composition bias toward basic residues. The span at 538 to 552 (TRKDGLHGDGPRERA) shows a compositional bias: basic and acidic residues.

Interacts with FANCL, GGNBP1 and ZNF403/GGNBP2.

In terms of biological role, may be involved in spermatogenesis. The chain is Gametogenetin (GGN) from Homo sapiens (Human).